Here is a 326-residue protein sequence, read N- to C-terminus: MVVIGLDVGYGDTKVIGIDGKRIIFPSRWAVTETESWGIGGKIPVLSTDGGQTKFIYGRYASGNNIRVPQGDGRLASKEAFPLIAAALWESGIHNDGSPVDLVIGSGTPLGTFDLEVKAAKEALENKILTVTGPEGEVRQYNVTRLIMRPQGVGAALYLLNQGIIEQQPGYGVVIDVGSRTTDVLTINLMDMEPVVELSFSLQIGVGDAISNLSRKIAKETGFVVPFDLAQEALSKPVMFRQKQVGGPEVAGPILEDLANRIIENIRLNLRGEVDRITSLIPVGGGANLIGDRFDEIAPGTTVRIKPEDLQFANALGYRDAAERSM.

Residues 10–14, serine 179, glutamine 231, 285–288, and glutamine 311 contribute to the ATP site; these read YGDTK and GGAN.

This sequence belongs to the thermophilic archaeal actin family.

Functionally, polymerizes into bundles of filaments. Polymerization requires NTP and is optimal with ATP, but GTP, UTP, CTP, and even the deoxy form of NTP can also support the polymerization reaction. The sequence is that of Archaeal actin homolog from Thermoplasma volcanium (strain ATCC 51530 / DSM 4299 / JCM 9571 / NBRC 15438 / GSS1).